We begin with the raw amino-acid sequence, 101 residues long: Small ribosomal subunit protein uS14 (101 aa).

It belongs to the universal ribosomal protein uS14 family. Part of the 30S ribosomal subunit. Contacts proteins S3 and S10.

Its function is as follows. Binds 16S rRNA, required for the assembly of 30S particles and may also be responsible for determining the conformation of the 16S rRNA at the A site. The sequence is that of Small ribosomal subunit protein uS14 from Methylibium petroleiphilum (strain ATCC BAA-1232 / LMG 22953 / PM1).